The sequence spans 283 residues: Elongation factor Ts (283 aa).

The involved in Mg(2+) ion dislocation from EF-Tu stretch occupies residues 79–82 (TDFV).

The protein belongs to the EF-Ts family.

The protein localises to the cytoplasm. Associates with the EF-Tu.GDP complex and induces the exchange of GDP to GTP. It remains bound to the aminoacyl-tRNA.EF-Tu.GTP complex up to the GTP hydrolysis stage on the ribosome. This chain is Elongation factor Ts, found in Shewanella putrefaciens (strain CN-32 / ATCC BAA-453).